A 182-amino-acid polypeptide reads, in one-letter code: Peptidyl-tRNA hydrolase (182 aa).

Tyr14 provides a ligand contact to tRNA. His19 (proton acceptor) is an active-site residue. Residues Phe64, Asn66, and Asn112 each coordinate tRNA.

It belongs to the PTH family. Monomer.

Its subcellular location is the cytoplasm. It catalyses the reaction an N-acyl-L-alpha-aminoacyl-tRNA + H2O = an N-acyl-L-amino acid + a tRNA + H(+). Its function is as follows. Hydrolyzes ribosome-free peptidyl-tRNAs (with 1 or more amino acids incorporated), which drop off the ribosome during protein synthesis, or as a result of ribosome stalling. In terms of biological role, catalyzes the release of premature peptidyl moieties from peptidyl-tRNA molecules trapped in stalled 50S ribosomal subunits, and thus maintains levels of free tRNAs and 50S ribosomes. The polypeptide is Peptidyl-tRNA hydrolase (Wolbachia sp. subsp. Drosophila simulans (strain wRi)).